A 455-amino-acid polypeptide reads, in one-letter code: tRNA-2-methylthio-N(6)-dimethylallyladenosine synthase (455 aa).

An MTTase N-terminal domain is found at Lys18–Ala133. Positions 27, 63, 97, 171, 175, and 178 each coordinate [4Fe-4S] cluster. In terms of domain architecture, Radical SAM core spans Cys157–Glu390. The region spanning Gln393–Val455 is the TRAM domain.

It belongs to the methylthiotransferase family. MiaB subfamily. Monomer. The cofactor is [4Fe-4S] cluster.

The protein resides in the cytoplasm. The enzyme catalyses N(6)-dimethylallyladenosine(37) in tRNA + (sulfur carrier)-SH + AH2 + 2 S-adenosyl-L-methionine = 2-methylsulfanyl-N(6)-dimethylallyladenosine(37) in tRNA + (sulfur carrier)-H + 5'-deoxyadenosine + L-methionine + A + S-adenosyl-L-homocysteine + 2 H(+). In terms of biological role, catalyzes the methylthiolation of N6-(dimethylallyl)adenosine (i(6)A), leading to the formation of 2-methylthio-N6-(dimethylallyl)adenosine (ms(2)i(6)A) at position 37 in tRNAs that read codons beginning with uridine. This chain is tRNA-2-methylthio-N(6)-dimethylallyladenosine synthase, found in Bacteroides thetaiotaomicron (strain ATCC 29148 / DSM 2079 / JCM 5827 / CCUG 10774 / NCTC 10582 / VPI-5482 / E50).